The following is a 538-amino-acid chain: Cytochrome P450 52A4 (538 aa).

Residues 27–46 (WYILIPTILLTLNFLSILHT) form a helical membrane-spanning segment. Heme is bound at residue cysteine 485.

The protein belongs to the cytochrome P450 family. It depends on heme as a cofactor.

The protein resides in the membrane. In terms of biological role, together with an NADPH cytochrome P450 the enzyme system catalyzes the terminal hydroxylation as the first step in the assimilation of alkanes and fatty acids. This Candida maltosa (Yeast) protein is Cytochrome P450 52A4 (CYP52A4).